The sequence spans 919 residues: Plasma membrane ATPase 1 (919 aa).

A compositionally biased stretch (basic and acidic residues) spans 1-16 (MADNAGEYHDAEKHAP). The interval 1-73 (MADNAGEYHD…APAAGEAKAV (73 aa)) is disordered. Residues 1-113 (MADNAGEYHD…KEELENPFLK (113 aa)) are Cytoplasmic-facing. A compositionally biased stretch (acidic residues) spans 34-63 (QDDEPDDDIDALIEELFSEDVQEEQEDNDD). Serine 89 carries the phosphoserine modification. A helical membrane pass occupies residues 114–134 (FIMFFVGPIQFVMEMAAALAA). The Extracellular portion of the chain corresponds to 135-138 (GLRD). The helical transmembrane segment at 139 to 158 (WVDFGVICALLMLNAVVGFV) threads the bilayer. The Cytoplasmic portion of the chain corresponds to 159 to 289 (QEYQAGSIVD…GTGHFTEVLN (131 aa)). The helical transmembrane segment at 290–311 (GIGTILLVLVLLTLFCIYTAAF) threads the bilayer. Residues 312–322 (YRSVRLARLLE) are Extracellular-facing. The chain crosses the membrane as a helical span at residues 323–345 (YTLAITIIGVPVGLPAVVTTTMA). Residues 346–717 (VGAAYLAEKQ…LIIRNQLLNL (372 aa)) are Cytoplasmic-facing. Aspartate 376 functions as the 4-aspartylphosphate intermediate in the catalytic mechanism. A Phosphoserine modification is found at serine 494. Mg(2+) contacts are provided by aspartate 632 and aspartate 636. Residues 718 to 736 (ELVVFIAIFADVATLAIAY) form a helical membrane-spanning segment. Residues 737 to 752 (DNAPYSMKPVKWNLPR) lie on the Extracellular side of the membrane. The chain crosses the membrane as a helical span at residues 753-772 (LWGLSTVIGIVLAIGTWITN). Over 773–824 (TTMIAQGQNRGIVQNFGVQDEVLFLEISLTENWLIFVTRCNGPFWSSIPSWQ) the chain is Cytoplasmic. Residues 825–845 (LSGAVLAVDILATMFCIFGWF) traverse the membrane as a helical segment. The Extracellular portion of the chain corresponds to 846–858 (KGGHQTSIVAVLR). Residues 859–875 (IWMYSFGIFCIMAGTYY) traverse the membrane as a helical segment. Residues 876–919 (ILSESAGFDRMMNGKPKESRNQRSIEDLVVALQRTSTRHEKGDA) are Cytoplasmic-facing. Residue serine 899 is modified to Phosphoserine.

It belongs to the cation transport ATPase (P-type) (TC 3.A.3) family. Type IIIA subfamily.

Its subcellular location is the cell membrane. The enzyme catalyses ATP + H2O + H(+)(in) = ADP + phosphate + 2 H(+)(out). Its function is as follows. The plasma membrane ATPase of plants and fungi is a hydrogen ion pump. The proton gradient it generates drives the active transport of nutrients by H(+)-symport. The resulting external acidification and/or internal alkinization may mediate growth responses. The sequence is that of Plasma membrane ATPase 1 (pma1) from Schizosaccharomyces pombe (strain 972 / ATCC 24843) (Fission yeast).